An 830-amino-acid chain; its full sequence is Isethionate sulfite-lyase (830 aa).

The PFL domain occupies 31-700; the sequence is KRVFKLLERF…VVSATPNGRV (670 aa). 2-hydroxyethane-1-sulfonate is bound by residues Arg-189, Gln-193, 468–470, and Arg-678; that span reads CIE. The Cysteine radical intermediate role is filled by Cys-468. Glu-470 serves as the catalytic Proton acceptor. Residues 707 to 830 enclose the Glycine radical domain; sequence DGSSPSHGAD…LIARTGHDQM (124 aa). A Glycine radical modification is found at Gly-805.

The protein belongs to the glycyl radical enzyme (GRE) family. Homodimer. Post-translationally, requires the activating protein IslB to generate the key active site glycyl radical on Gly-805 that is involved in catalysis.

The catalysed reaction is 2-hydroxyethane-1-sulfonate = acetaldehyde + sulfite + H(+). The protein operates within organosulfur degradation; alkanesulfonate degradation. Functionally, involved in an anaerobic respiration pathway that converts the sulfonate taurine (2-aminoethanesulfonate) to ammonia, acetate and sulfide. Catalyzes the radical-mediated C-S bond cleavage of isethionate (2-hydroxyethanesulfonate) to form sulfite and acetaldehyde. Is not able to use any alternate organosulfonate or (S)-1,2-propanediol or choline as a substrate, showing that this enzyme is highly specific for isethionate. This chain is Isethionate sulfite-lyase, found in Bilophila wadsworthia (strain 3_1_6).